Here is a 113-residue protein sequence, read N- to C-terminus: Ribosome-binding factor A (113 aa).

It belongs to the RbfA family. Monomer. Binds 30S ribosomal subunits, but not 50S ribosomal subunits or 70S ribosomes.

The protein localises to the cytoplasm. One of several proteins that assist in the late maturation steps of the functional core of the 30S ribosomal subunit. Associates with free 30S ribosomal subunits (but not with 30S subunits that are part of 70S ribosomes or polysomes). Required for efficient processing of 16S rRNA. May interact with the 5'-terminal helix region of 16S rRNA. The protein is Ribosome-binding factor A of Mycoplasmopsis agalactiae (strain NCTC 10123 / CIP 59.7 / PG2) (Mycoplasma agalactiae).